Consider the following 1834-residue polypeptide: Non-reducing polyketide synthase spyA (1834 aa).

The Starter acyltransferase (SAT) domain occupies 91–255; that stretch reads LAPLTVIIHL…TRIPIYGRYH (165 aa). A Ketosynthase family 3 (KS3) domain is found at 385 to 801; the sequence is EHSIAVIGAA…GNNTAVIVCE (417 aa). Residues Cys-551, His-687, and His-724 each act as for beta-ketoacyl synthase activity in the active site. The region spanning 919–1164 is the Malonyl-CoA:ACP transacylase (MAT) domain; the sequence is YEGSSLLRSH…KELGPCTWVE (246 aa). The segment at 1269-1398 is N-terminal hotdog fold; the sequence is PLVYLLRDEG…GVISLRQERH (130 aa). Residues 1269–1577 enclose the PKS/mFAS DH domain; it reads PLVYLLRDEG…FVRITASSLN (309 aa). The product template (PT) domain stretch occupies residues 1269–1577; the sequence is PLVYLLRDEG…FVRITASSLN (309 aa). A C-terminal hotdog fold region spans residues 1428–1577; it reads AISLKEGIIY…FVRITASSLN (150 aa). Residues 1616–1690 enclose the Carrier 1 domain; the sequence is SDILSILSHL…TLCQEIQTQR (75 aa). Ser-1650 carries the O-(pantetheine 4'-phosphoryl)serine modification. The disordered stretch occupies residues 1693–1720; it reads RLARASRTTTATRNTSFSLGRRTSSTES. Positions 1697–1710 are enriched in low complexity; that stretch reads ASRTTTATRNTSFS. Residues 1731-1807 enclose the Carrier 2 domain; sequence SKSAAVLAQL…GLARLILASE (77 aa). Ser-1767 is subject to O-(pantetheine 4'-phosphoryl)serine.

Pantetheine 4'-phosphate serves as cofactor.

It carries out the reaction 2 malonyl-CoA + acetyl-CoA + 2 H(+) = triacetate lactone + 2 CO2 + 3 CoA. Its pathway is secondary metabolite biosynthesis; terpenoid biosynthesis. In terms of biological role, non-reducing polyketide synthase; part of the gene cluster that mediates the biosynthesis of meroterpenoids called sartorypyrones. The biosynthesis of sartorypyrones begins with the production of triacetic acid lactone (TAL) by the NR-PKS spyA using one molecule of acetyl-CoA and two molecules of malonyl-CoA. As spyA lacks a thioesterase (TE) domain, TAL is likely generated through self-release from spyA by spontaneous lactonization. After production of TAL, the prenyltransferase spyF then conjugates geranylgeranyl pyrophosphate (GGPP) to TAL to form geranylgeranyl-triacetate lactone, for which the pathway-specific geranylgeranyl pyrophosphate synthase (GGPS) spyE is required to provide GGPP. Subsequently, geranylgeranyl-triacetate lactone is epoxidized at the terminal olein by the FAD-dependent monooxygenase spyC, followed by cyclization of the terpenoid component catalyzed by the terpene cyclase spyD to produce both the bicyclic sartorypyrone F and the monocyclic sartorypyrone D. Finally, the last step of the biosynthesis involves the acetylation of the meroterpenoids sartorypyrones D and F by the acetyltransferase SpyB to produce sartorypyrones A and G, respectively. In Aspergillus fumigatus (strain ATCC MYA-4609 / CBS 101355 / FGSC A1100 / Af293) (Neosartorya fumigata), this protein is Non-reducing polyketide synthase spyA.